The primary structure comprises 103 residues: Large ribosomal subunit protein bL21 (103 aa).

Belongs to the bacterial ribosomal protein bL21 family. In terms of assembly, part of the 50S ribosomal subunit. Contacts protein L20.

Functionally, this protein binds to 23S rRNA in the presence of protein L20. This is Large ribosomal subunit protein bL21 from Burkholderia mallei (strain NCTC 10247).